Here is a 1203-residue protein sequence, read N- to C-terminus: Potassium/sodium hyperpolarization-activated cyclic nucleotide-gated channel 4 (1203 aa).

The tract at residues 1 to 182 is disordered; sequence MDKLPPSMRK…QPASASCEQP (182 aa). Residues 1 to 263 lie on the Cytoplasmic side of the membrane; sequence MDKLPPSMRK…IIHPYSDFRF (263 aa). Acidic residues predominate over residues 26–36; that stretch reads MDEEEDAEEEG. Positions 105 to 117 are enriched in gly residues; the sequence is SRGGGSGGTGSGS. Over residues 121–133 the composition is skewed to basic and acidic residues; sequence HLHDSAEERRLIA. A Phosphoserine modification is found at S138. Over residues 163-174 the composition is skewed to pro residues; sequence ASPPPPQQPPQP. An involved in subunit assembly region spans residues 209–260; the sequence is GQAGFMQRQFGAMLQPGVNKFSLRMFGSQKAVEREQERVKSAGFWIIHPYSD. The helical transmembrane segment at 264 to 286 threads the bilayer; sequence YWDLTMLLLMVGNLIIIPVGITF. Over 287-293 the chain is Extracellular; it reads FKDENTT. Residues 294–314 form a helical membrane-spanning segment; the sequence is PWIVFNVVSDTFFLIDLVLNF. Topologically, residues 315–336 are cytoplasmic; sequence RTGIVVEDNTEIILDPQRIKMK. A helical transmembrane segment spans residues 337-359; the sequence is YLKSWFMVDFISSIPVDYIFLIV. Residues 360 to 378 are Extracellular-facing; the sequence is ETRIDSEVYKTARALRIVR. A helical; Voltage-sensor membrane pass occupies residues 379 to 399; sequence FTKILSLLRLLRLSRLIRYIH. At 400–413 the chain is on the cytoplasmic side; that stretch reads QWEEIFHMTYDLAS. A helical membrane pass occupies residues 414–436; sequence AVVRIVNLIGMMLLLCHWDGCLQ. Residues 437–464 are Extracellular-facing; sequence FLVPMLQDFPDDCWVSINNMVNNSWGKQ. N458 carries N-linked (GlcNAc...) asparagine glycosylation. An intramembrane region (pore-forming) is located at residues 465 to 486; that stretch reads YSYALFKAMSHMLCIGYGRQAP. Residues 487–491 lie on the Extracellular side of the membrane; that stretch reads VGMSD. The helical transmembrane segment at 492–517 threads the bilayer; sequence VWLTMLSMIVGATCYAMFIGHATALI. Residues 518–1203 are Cytoplasmic-facing; that stretch reads QSLDSSRRQY…PVRSKLPSNL (686 aa). Y559, K562, F564, and E566 together coordinate 3',5'-cyclic GMP. Residues G659, E660, C662, R669, T670, V673, and R710 each coordinate 3',5'-cyclic AMP. Disordered regions lie at residues 836–856, 870–897, and 918–1203; these read ALGS…SSSS, GLSP…TPSA, and LSSS…PSNL. Low complexity-rich tracts occupy residues 918–941 and 966–986; these read LSSS…AAQP and RSPS…SLGL. Positions 995–1004 are enriched in pro residues; sequence ETPPRQPEPP. The segment covering 1005–1028 has biased composition (low complexity); sequence SLVAGASGGASPVGFTPRGGLSPP. Residues 1029-1042 are compositionally biased toward pro residues; the sequence is GHSPGPPRTFPSAP. The span at 1045-1056 shows a compositional bias: low complexity; it reads ASGSHGSLLLPP. Residues S1105 and S1108 each carry the phosphoserine modification. Over residues 1122-1137 the composition is skewed to gly residues; it reads AGGGSGGSGSSGGLGP.

It belongs to the potassium channel HCN family. Homotetramer. The channel assemble into homotetramers or heteromeric complexes that contains of four pore-forming subunits. Interacts with PEX5L with a 4:4 HCN4:PEX5L stoichiometry; reduces the effects of cAMP on the voltage-dependence and rate of activation. Interacts with IRAG1; regulates HCN4 channel activity. Interacts with IRAG2; regulates HCN4 channel activity. In terms of processing, S-palmitoylated. As to expression, highly expressed in thalamus, testis and in heart, both in ventricle and atrium. Detected at much lower levels in amygdala, substantia nigra, cerebellum and hippocampus.

Its subcellular location is the cell membrane. It carries out the reaction K(+)(in) = K(+)(out). The catalysed reaction is Na(+)(in) = Na(+)(out). Its activity is regulated as follows. Activated by cAMP and to a lesser extent by cGMP and cCMP. cAMP binding causes a conformation change that leads to the assembly of an active tetramer and channel opening. Binding of cAMP removes a tonic inhibition conferred by cyclic nucleotide-binding domain (CNBD) on channel opening. Cyclic dinucleotides can modulate HCN4 channel; cyclic dinucleotides acting as potent antagonists of cAMP. Inhibited by extracellular Cs(+) ions. Auxiliary subunits can also regulate HCN4 channel. IRAG1 causes a gain-of-function by shifting HCN4 activation to more depolarized membrane potentials in the absence of cAMP. In contrast, IRAG2 causes a loss-of-function by inhibiting cAMP-dependent potentiation of HCN4 activation. Functionally, hyperpolarization-activated ion channel that are permeable to Na(+) and K(+) ions with very slow activation and inactivation. Exhibits higher selectivity for K(+) over Na(+) ions. Contributes to the native pacemaker currents in heart (If) that regulate the rhythm of heart beat. Contributes to the native pacemaker currents in neurons (Ih). May mediate responses to sour stimuli. The polypeptide is Potassium/sodium hyperpolarization-activated cyclic nucleotide-gated channel 4 (Homo sapiens (Human)).